The following is a 229-amino-acid chain: Lactate utilization protein C (229 aa).

It belongs to the LutC/YkgG family.

Functionally, is involved in L-lactate degradation and allows cells to grow with lactate as the sole carbon source. This is Lactate utilization protein C from Shouchella clausii (strain KSM-K16) (Alkalihalobacillus clausii).